The sequence spans 324 residues: Phosphate transport system permease protein PstC (324 aa).

The next 6 membrane-spanning stretches (helical) occupy residues 29–49 (LLLT…ALSM), 87–107 (IVTA…IAFF), 126–146 (LLAG…LVPV), 173–193 (PLGI…IPFI), 235–255 (VIGG…AVAF), and 291–311 (SALL…LVIA). Residues 83-311 (IYGTIVTALI…IVTFAVLVIA (229 aa)) enclose the ABC transmembrane type-1 domain.

It belongs to the binding-protein-dependent transport system permease family. CysTW subfamily.

It localises to the cell inner membrane. Functionally, part of a binding-protein-dependent transport system for phosphate; probably responsible for the translocation of the substrate across the membrane. In Xylella fastidiosa (strain 9a5c), this protein is Phosphate transport system permease protein PstC (pstC).